Consider the following 439-residue polypeptide: UPF0229 protein Nham_0975 (439 aa).

The disordered stretch occupies residues Arg39 to Asp106. A compositionally biased stretch (basic and acidic residues) spans Ser58–Val76.

The protein belongs to the UPF0229 family.

The chain is UPF0229 protein Nham_0975 from Nitrobacter hamburgensis (strain DSM 10229 / NCIMB 13809 / X14).